Consider the following 470-residue polypeptide: Nuclear receptor ROR-beta (470 aa).

Positions 18 to 93 (VIPCKICGDK…LGMSRDAVKF (76 aa)) form a DNA-binding region, nuclear receptor. 2 NR C4-type zinc fingers span residues 21–41 (CKIC…CEGC) and 57–81 (CPRQ…LQKC). Positions 104–117 (LYAEVQKHQQRLQE) are enriched in basic and acidic residues. Residues 104–127 (LYAEVQKHQQRLQEQRQQQSGEAE) are disordered. In terms of domain architecture, NR LBD spans 222–460 (EIDRIAQNII…TLFPPLYKEL (239 aa)). Residues 456–461 (LYKELF) carry the AF-2 motif.

Belongs to the nuclear hormone receptor family. NR1 subfamily. Monomer. Interacts with CRX. In terms of tissue distribution, isoform 2 expressed with circadian rhythm in eye and pineal gland. Isoform 1 expressed in retina cortex, thalamus, and hypothalamus.

It is found in the nucleus. The protein localises to the nucleoplasm. Its function is as follows. Nuclear receptor that binds DNA as a monomer to ROR response elements (RORE) containing a single core motif half-site 5'-AGGTCA-3' preceded by a short A-T-rich sequence. Considered to have intrinsic transcriptional activity, have some natural ligands such as all-trans retinoic acid (ATRA) and other retinoids which act as inverse agonists repressing the transcriptional activity. Required for normal postnatal development of rod and cone photoreceptor cells. Modulates rod photoreceptors differentiation at least by inducing the transcription factor NRL-mediated pathway. In cone photoreceptor cells, regulates transcription of OPN1SW. Involved in the regulation of the period length and stability of the circadian rhythm. May control cytoarchitectural patterning of neocortical neurons during development. May act in a dose-dependent manner to regulate barrel formation upon innervation of layer IV neurons by thalamocortical axons. May play a role in the suppression of osteoblastic differentiation through the inhibition of RUNX2 transcriptional activity. Critical for hindlimb motor control and for the differentiation of amacrine and horizontal cells in the retina. Regulates the expression of PTF1A synergistically with FOXN4. In Rattus norvegicus (Rat), this protein is Nuclear receptor ROR-beta (Rorb).